Reading from the N-terminus, the 291-residue chain is ATP synthase subunit a (291 aa).

A run of 6 helical transmembrane segments spans residues 50 to 70 (LDSM…FWIV), 108 to 128 (IAPL…MDLI), 161 to 181 (DPNI…FYSI), 203 to 223 (PVAK…TFLA), 241 to 261 (LIFI…SVPW), and 262 to 282 (AIFH…LTIV).

Belongs to the ATPase A chain family. In terms of assembly, F-type ATPases have 2 components, CF(1) - the catalytic core - and CF(0) - the membrane proton channel. CF(1) has five subunits: alpha(3), beta(3), gamma(1), delta(1), epsilon(1). CF(0) has three main subunits: a(1), b(2) and c(9-12). The alpha and beta chains form an alternating ring which encloses part of the gamma chain. CF(1) is attached to CF(0) by a central stalk formed by the gamma and epsilon chains, while a peripheral stalk is formed by the delta and b chains.

It is found in the cell inner membrane. Its function is as follows. Key component of the proton channel; it plays a direct role in the translocation of protons across the membrane. The polypeptide is ATP synthase subunit a (Acinetobacter baumannii (strain SDF)).